The chain runs to 146 residues: GFLTAEEKGLVNGLWGKVNVDEVGGEALGRLLVVYPWTQRFFQSFGDLSSADAIMHNSKVKAHGKKVLNSFSDGLKHVDDLKGTFAKLSELHCDKLHVDPENFKLLGNVLVCVLAHHFGKEFTPQVQAAYQKVVAGVASALAHRYH.

The Globin domain maps to 2-146; sequence FLTAEEKGLV…VASALAHRYH (145 aa). Ser44 carries the post-translational modification Phosphoserine. At Lys59 the chain carries N6-acetyllysine. His63 lines the heme b pocket. N6-acetyllysine is present on Lys82. His92 is a heme b binding site. The residue at position 93 (Cys93) is an S-nitrosocysteine.

Belongs to the globin family. In terms of assembly, heterotetramer of two alpha chains and two beta chains. In terms of tissue distribution, red blood cells.

Functionally, involved in oxygen transport from the lung to the various peripheral tissues. The polypeptide is Hemoglobin subunit beta (HBB) (Paguma larvata (Masked palm civet)).